We begin with the raw amino-acid sequence, 266 residues long: Apolipoprotein A-I (266 aa).

A signal peptide spans 1-18 (MKAVVLTLAVLFLTGSQA). Repeat copies occupy residues 67 to 88 (LKLL…EQIG) and 89 to 110 (PVTQ…QEMN). The segment at 67-266 (LKLLDNWDSL…DEATKKLNSQ (200 aa)) is 10 X approximate tandem repeats. Met-109 carries the methionine sulfoxide modification. The stretch at 111-121 (KDLEEVKKKVQ) is one 3; half-length repeat. 5 repeat units span residues 122 to 143 (PYLD…QKVA), 144 to 165 (PLGA…EKLS), 166 to 187 (PLGE…AQLA), 188 to 209 (PYGE…EGGG), and 210 to 231 (AALT…EKAK). One copy of the 9; half-length repeat lies at 232-242 (PALEDLRQGLL). Repeat 10 spans residues 243 to 266 (PVLENFRVSLLAAVDEATKKLNSQ).

The protein belongs to the apolipoprotein A1/A4/E family. In terms of assembly, homodimer. Interacts with APOA1BP and CLU. Component of a sperm activating protein complex (SPAP), consisting of APOA1, an immunoglobulin heavy chain, an immunoglobulin light chain and albumin. Interacts with NDRG1. Interacts with SCGB3A2. Interacts with NAXE and YJEFN3. Glycosylated. In terms of processing, palmitoylated. Post-translationally, phosphorylation sites are present in the extracellular medium.

The protein localises to the secreted. Functionally, participates in the reverse transport of cholesterol from tissues to the liver for excretion by promoting cholesterol efflux from tissues and by acting as a cofactor for the lecithin cholesterol acyltransferase (LCAT). As part of the SPAP complex, activates spermatozoa motility. In Leptonychotes weddellii (Weddell seal), this protein is Apolipoprotein A-I (APOA1).